Reading from the N-terminus, the 198-residue chain is Recombination protein RecR (198 aa).

A C4-type zinc finger spans residues 57-72 (CSLCGNLDTVDPCHIC). Residues 80–175 (GLICVVETVG…TVTRVGHGVP (96 aa)) form the Toprim domain.

Belongs to the RecR family.

Functionally, may play a role in DNA repair. It seems to be involved in an RecBC-independent recombinational process of DNA repair. It may act with RecF and RecO. This is Recombination protein RecR from Gluconobacter oxydans (strain 621H) (Gluconobacter suboxydans).